Reading from the N-terminus, the 329-residue chain is Ketol-acid reductoisomerase (NADP(+)) (329 aa).

The KARI N-terminal Rossmann domain maps to 1-181 (MKVYYENDAD…GATRSGVLQT (181 aa)). NADP(+)-binding positions include 24 to 27 (YGSQ), arginine 47, and 82 to 85 (DQVQ). Histidine 107 is a catalytic residue. Position 133 (glycine 133) interacts with NADP(+). The 146-residue stretch at 182–327 (TFREETETDL…GELRKMMSWL (146 aa)) folds into the KARI C-terminal knotted domain. Residues aspartate 190, glutamate 194, glutamate 226, and glutamate 230 each contribute to the Mg(2+) site. A substrate-binding site is contributed by serine 251.

The protein belongs to the ketol-acid reductoisomerase family. Mg(2+) is required as a cofactor.

The catalysed reaction is (2R)-2,3-dihydroxy-3-methylbutanoate + NADP(+) = (2S)-2-acetolactate + NADPH + H(+). The enzyme catalyses (2R,3R)-2,3-dihydroxy-3-methylpentanoate + NADP(+) = (S)-2-ethyl-2-hydroxy-3-oxobutanoate + NADPH + H(+). Its pathway is amino-acid biosynthesis; L-isoleucine biosynthesis; L-isoleucine from 2-oxobutanoate: step 2/4. The protein operates within amino-acid biosynthesis; L-valine biosynthesis; L-valine from pyruvate: step 2/4. Its function is as follows. Involved in the biosynthesis of branched-chain amino acids (BCAA). Catalyzes an alkyl-migration followed by a ketol-acid reduction of (S)-2-acetolactate (S2AL) to yield (R)-2,3-dihydroxy-isovalerate. In the isomerase reaction, S2AL is rearranged via a Mg-dependent methyl migration to produce 3-hydroxy-3-methyl-2-ketobutyrate (HMKB). In the reductase reaction, this 2-ketoacid undergoes a metal-dependent reduction by NADPH to yield (R)-2,3-dihydroxy-isovalerate. This is Ketol-acid reductoisomerase (NADP(+)) from Maridesulfovibrio salexigens (strain ATCC 14822 / DSM 2638 / NCIMB 8403 / VKM B-1763) (Desulfovibrio salexigens).